Consider the following 1380-residue polypeptide: MGTEAGEGITFSVPPFASVGFCTIPEGGSCRRGGGAATAAEGEPSLQPLLVPPPPPPPGSFWNVESAAAPGTSCPTTAPGSSATRGRGNSGSGGGRRTTVAYVINEASQGQLVVAESEALQSLREACEAVGATLETLHFGKLDFGETAVLDRFYNADIAVVEMSDAFRQPSLFYHLGVRESFSMANNIILYCDTNSDSLQSLKEIICQKNTVCTGNYTFIPYMVTPHNKVYCCDSSFMKGLTELMQPNFELLLGPICLPLVDRFVQLLKVAQASSSQYFRESILSDIRKARNLYTGKELAAELARIRQRVDNIEVLTADIVINLLLSYRDIQDYDSIVKLVETLEKLPTFDLASHHHVKFHYAFALNRRNLPGDRAKALDIMIPMVQSEEQVASDMYCLVGRIYKDMFLDSNFTDTESRDHGASWFKKAFESEPTLQSGINYAVLLLAAGHQFESSFELRKVGVKLSSLLGKKGNLEKLQSYWEVGFFLGASVLANDHLRVIQASEKLFRLKTPAWYLKSIVETILIYKHFVKLTTEQPSAKQELVDFWMDFLVEATKTDVTVVRFPVLILEPTKIYQPSYLSINNEVEEKTISIWHVLPDDKKGIHEWNFGASSVRGVSISKFEERCCFLYVLHNSDDFQIYFCTELHCKRFFEMVNTITEEKGRGAEDGDCEGDSLEYDYEYDENGDRVVLGKGTYGIVYAGRDLSNQVRIAIKEIPERDSRYSQPLHEEIALHKHLKHKNIVQYLGSFSENGFIKIFMEQVPGGSLSALLRSKWGPLKDNEQTIGFYTKQILEGLKYLHDNQIVHRDIKGDNVLINTYSGVLKISDFGTSKRLAGINPCTETFTGTLQYMAPEIIDKGPRGYGKAADIWSLGCTIIEMATGKPPFYELGEPQAAMFKVGMFKVHPEIPESMSAEAKAFILKCFEPDPDKRACANDLLIDEFLKVSSKKKKTQPKLSALSTGSNEYLRSISLPVPVLVEDTSSSSEYGSVSPDTELKADPFSFKARAKSCGEKDGKGIRTLFLGIPDENFEDHSAPPSPEEKDSGFFMLRKDSERRATLHRILTEDQDKVVRNLMESLAQGAEEPKLKWEHITTLISSLREFVRSTDRKIIATTLSKLKLELDFDSHGISQVQVVLFGFQDAVNKVLRNHNIKPHWMFALDSIIRKAVQTAITILVPELRPHFSLASESDTADPEDLDVEDEHEELSSNQTVRRPQAITEDAVATSGVSTLSSTVSHDSQNAHRSLNVQLGRMKIETNRLLEELVRKERELQALLHQAIEEKDQEIRHLKLKSQPIDIPGFPVCHLNSPGTTTEDSELPGWLRENGADEDTISRFLAEDYTLVDVLYYVTRDDLKCLRLRGGMLCTLWKAIIDFRNKC.

Residues 30–97 (CRRGGGAATA…GNSGSGGGRR (68 aa)) are disordered. Positions 37-49 (ATAAEGEPSLQPL) are enriched in low complexity. Pro residues predominate over residues 50–59 (LVPPPPPPPG). Asymmetric dimethylarginine occurs at positions 85 and 87. The residue at position 90 (S90) is a Phosphoserine; by PIM1 and PKB/AKT1. The interval 649–1374 (HCKRFFEMVN…MLCTLWKAII (726 aa)) is interaction with PPIA/CYPA. One can recognise a Protein kinase domain in the interval 687–945 (NGDRVVLGKG…ANDLLIDEFL (259 aa)). Residues 693 to 701 (LGKGTYGIV) and K716 contribute to the ATP site. A Phosphotyrosine modification is found at Y725. Catalysis depends on D810, which acts as the Proton acceptor. Position 820 is a phosphothreonine; by autocatalysis (T820). Residue T845 is modified to Phosphothreonine; by autocatalysis, MELK and MAP3K6. A Phosphothreonine; by autocatalysis modification is found at T849. Phosphoserine is present on S965. S973 carries the post-translational modification Phosphoserine; by autocatalysis. 2 positions are modified to phosphoserine: S1036 and S1040. The interval 1188 to 1215 (ASESDTADPEDLDVEDEHEELSSNQTVR) is disordered. Acidic residues predominate over residues 1192–1206 (DTADPEDLDVEDEHE). Positions 1252-1292 (LGRMKIETNRLLEELVRKERELQALLHQAIEEKDQEIRHLK) form a coiled coil.

The protein belongs to the protein kinase superfamily. STE Ser/Thr protein kinase family. MAP kinase kinase kinase subfamily. Homodimer when inactive. Binds both upstream activators and downstream substrates in multimolecular complexes. Part of a cytoplasmic complex made of HIPK1, DAB2IP and MAP3K5 in response to TNF. This complex formation promotes MAP3K5-JNK activation and subsequent apoptosis. Interacts with SOCS1 which recognizes phosphorylation of Tyr-725 and induces MAP3K5/ASK1 degradation in endothelial cells. Interacts with the 14-3-3 family proteins such as YWHAB, YWHAE, YWHAQ, YWHAH, YWHAZ and SFN. Interacts with ARRB2, BIRC2, DAB2IP, IGF1R, MAP3K6/ASK2, PIM1, PGAM5, SOCS1, STUB1, TRAF2 and TXN. Interacts with ERN1 in a TRAF2-dependent manner. Interacts with calcineurin subunit PPP3R1, PPP5C, PPM1L and TRAF6. Interacts (via N-terminus) with RAF1 and this interaction inhibits the proapoptotic function of MAP3K5. Interacts with DAB2IP (via N-terminus C2 domain); the interaction occurs in a TNF-alpha-dependent manner. Interacts with DUSP13A; may positively regulate apoptosis. Interacts with PPIA/CYPA. Interacts with PRMT1; the interaction results in MAP3K5 methylation by PRMT1 which inhibits MAP3K5 activation. Interacts with TRAF2; the interaction is inhibited by PRMT1. Interacts with TRIM48. Requires Mg(2+) as cofactor. Ser-90 and Ser-1040 are inactivating phosphorylation sites, the former of which is phosphorylated by AKT1. Phosphorylated at Ser-973 which induces association of MAP3K5/ASK1 with the 14-3-3 family proteins and suppresses MAP3K5/ASK1 activity. Calcineurin (CN) dephosphorylates this site. Also dephosphorylated and activated by PGAM5. Phosphorylated at Thr-845 through autophosphorylation and by MAP3K6/ASK2 which leads to activation. Thr-845 is dephosphorylated by PPP5C. Phosphorylation at Ser-973 in response to oxidative stress is negatively regulated by PPIA/CYPA. In terms of processing, ubiquitinated. Tumor necrosis factor (TNF) induces TNFR2-dependent ubiquitination, leading to proteasomal degradation. Ubiquitinated by RC3H2 in a TRIM48-dependent manner. Post-translationally, methylation at Arg-85 and Arg-87 by PRMT1 promotes association of MAP3K5 with thioredoxin and negatively regulates MAP3K5 association with TRAF2, inhibiting MAP3K5 activation. Methylation is blocked by ubiquitination of PRMT1 by TRIM48. In terms of tissue distribution, expressed in various adult mouse tissues including heart, brain, lung, liver and kidney.

It is found in the cytoplasm. Its subcellular location is the endoplasmic reticulum. The enzyme catalyses L-seryl-[protein] + ATP = O-phospho-L-seryl-[protein] + ADP + H(+). It catalyses the reaction L-threonyl-[protein] + ATP = O-phospho-L-threonyl-[protein] + ADP + H(+). With respect to regulation, activated by various stressors, including oxidative stress, endoplasmic reticulum stress, and calcium overload, as well as by receptor-mediated inflammatory signals, such as the tumor necrosis factor (TNF) and lipopolysaccharide (LPS). Homophilic association of MAP3K5/ASK1 through the C-terminal coiled-coil domains and the heteromeric complex formation of MAP3K5/ASK1 with the reduced form of thioredoxin (TXN), constitutes an inactive form of the kinase. Upon ROS-induced dissociation of TXN from MAP3K5/ASK1, TRAF2 and TRAF6 are reciprocally recruited to MAP3K5/ASK1 and form the active MAP3K5/ASK1 signalosome, in which TRAF2 and TRAF6 appear to facilitate the active configuration of MAP3K5/ASK1. MAP3K5/ASK1 activity is also regulated through several phosphorylation and dephosphorylation events. Thr-845 is an activating phosphorylation site that is autophosphorylated and phosphorylated by MAP3K6/ASK2 and dephosphorylated by PPP5C. Ser-90 and Ser-1040 are inactivating phosphorylation sites, the former of which is phosphorylated by AKT1. Phosphorylation of Ser-973 induces association of MAP3K5/ASK1 with the 14-3-3 family proteins, which suppresses MAP3K5/ASK1 activity. Calcium/calmodulin-activated protein phosphatase calcineurin (PPP3CA) has been shown to directly dephosphorylate this site. SOCS1 binds to ASK1 by recognizing phosphorylation of Tyr-725 and induces MAP3K5/ASK1 degradation in endothelial cells. Also dephosphorylated and activated by PGAM5. Contains an N-terminal autoinhibitory domain. Its function is as follows. Serine/threonine kinase which acts as an essential component of the MAP kinase signal transduction pathway. Plays an important role in the cascades of cellular responses evoked by changes in the environment. Mediates signaling for determination of cell fate such as differentiation and survival. Plays a crucial role in the apoptosis signal transduction pathway through mitochondria-dependent caspase activation. MAP3K5/ASK1 is required for the innate immune response, which is essential for host defense against a wide range of pathogens. Mediates signal transduction of various stressors like oxidative stress as well as by receptor-mediated inflammatory signals, such as the tumor necrosis factor (TNF) or lipopolysaccharide (LPS). Once activated, acts as an upstream activator of the MKK/JNK signal transduction cascade and the p38 MAPK signal transduction cascade through the phosphorylation and activation of several MAP kinase kinases like MAP2K4/SEK1, MAP2K3/MKK3, MAP2K6/MKK6 and MAP2K7/MKK7. These MAP2Ks in turn activate p38 MAPKs and c-jun N-terminal kinases (JNKs). Both p38 MAPK and JNKs control the transcription factors activator protein-1 (AP-1). The polypeptide is Mitogen-activated protein kinase kinase kinase 5 (Map3k5) (Mus musculus (Mouse)).